The sequence spans 205 residues: uncharacterized protein (205 aa).

Residues 11–71 form the HTH tetR-type domain; that stretch reads KTRRALVDAA…EMVDEAGLML (61 aa).

This is an uncharacterized protein from Haemophilus influenzae (strain ATCC 51907 / DSM 11121 / KW20 / Rd).